The primary structure comprises 220 residues: MAKQEYKQLPKRAEVHSATEQFKDTVKTSLGLDLFKGLGLTIKEFFSPSVTIHYPMEQLPLSPRYRAVHNLQRLLDSGSERCIGCGLCEKICTSNCIRIITHKGEDNRKKIDSYTINLGRCIYCGLCAEVCPELAIVMGNRFENASTQRSQYGSKSEFLTSEQDAKNCSHAEFLGFGAVSPNYNERMQATPLDYVQEPSKEESQEETPTNPESNKGDENV.

4Fe-4S ferredoxin-type domains follow at residues 71–102 (LQRLLDSGSERCIGCGLCEKICTSNCIRIITH) and 112–141 (DSYTINLGRCIYCGLCAEVCPELAIVMGNR). Residues cysteine 82, cysteine 85, cysteine 88, cysteine 92, cysteine 121, cysteine 124, cysteine 127, and cysteine 131 each coordinate [4Fe-4S] cluster. The tract at residues 187-220 (MQATPLDYVQEPSKEESQEETPTNPESNKGDENV) is disordered.

The protein belongs to the complex I 23 kDa subunit family. NDH-1 is composed of 14 different subunits. Subunits NuoA, H, J, K, L, M, N constitute the membrane sector of the complex. [4Fe-4S] cluster is required as a cofactor.

The protein resides in the cell inner membrane. The enzyme catalyses a quinone + NADH + 5 H(+)(in) = a quinol + NAD(+) + 4 H(+)(out). Functionally, NDH-1 shuttles electrons from NADH, via FMN and iron-sulfur (Fe-S) centers, to quinones in the respiratory chain. The immediate electron acceptor for the enzyme in this species is believed to be ubiquinone. Couples the redox reaction to proton translocation (for every two electrons transferred, four hydrogen ions are translocated across the cytoplasmic membrane), and thus conserves the redox energy in a proton gradient. The protein is NADH-quinone oxidoreductase subunit I of Helicobacter pylori (strain ATCC 700392 / 26695) (Campylobacter pylori).